A 1404-amino-acid chain; its full sequence is DNA-directed RNA polymerase subunit beta' (1404 aa).

4 residues coordinate Zn(2+): Cys-70, Cys-72, Cys-85, and Cys-88. Mg(2+) is bound by residues Asp-460, Asp-462, and Asp-464. Residues Cys-814, Cys-888, Cys-895, and Cys-898 each contribute to the Zn(2+) site.

Belongs to the RNA polymerase beta' chain family. As to quaternary structure, the RNAP catalytic core consists of 2 alpha, 1 beta, 1 beta' and 1 omega subunit. When a sigma factor is associated with the core the holoenzyme is formed, which can initiate transcription. Requires Mg(2+) as cofactor. It depends on Zn(2+) as a cofactor.

The enzyme catalyses RNA(n) + a ribonucleoside 5'-triphosphate = RNA(n+1) + diphosphate. DNA-dependent RNA polymerase catalyzes the transcription of DNA into RNA using the four ribonucleoside triphosphates as substrates. This is DNA-directed RNA polymerase subunit beta' from Buchnera aphidicola subsp. Baizongia pistaciae (strain Bp).